Consider the following 137-residue polypeptide: NADH dehydrogenase [ubiquinone] 1 beta subcomplex subunit 7 (137 aa).

A lipid anchor (N-myristoyl glycine) is attached at Gly-2. One can recognise a CHCH domain in the interval Arg-56 to Arg-98. The short motif at Cys-59–Cys-69 is the Cx9C motif 1 element. 2 cysteine pairs are disulfide-bonded: Cys-59–Cys-90 and Cys-69–Cys-80. Ser-73 carries the phosphoserine modification. Residues Cys-80–Cys-90 carry the Cx9C motif 2 motif. Residues Lys-113 to Leu-137 form a disordered region.

The protein belongs to the complex I NDUFB7 subunit family. In terms of assembly, complex I is composed of 45 different subunits.

It is found in the mitochondrion inner membrane. Its subcellular location is the mitochondrion intermembrane space. Its function is as follows. Accessory subunit of the mitochondrial membrane respiratory chain NADH dehydrogenase (Complex I), that is believed not to be involved in catalysis. Complex I functions in the transfer of electrons from NADH to the respiratory chain. The immediate electron acceptor for the enzyme is believed to be ubiquinone. The sequence is that of NADH dehydrogenase [ubiquinone] 1 beta subcomplex subunit 7 (NDUFB7) from Gorilla gorilla gorilla (Western lowland gorilla).